A 320-amino-acid chain; its full sequence is 1-aminocyclopropane-1-carboxylate oxidase 3 (320 aa).

The Fe2OG dioxygenase domain maps to 153 to 253 (PNFGTKVSNY…RMSLASFYNP (101 aa)). The Fe cation site is built by histidine 177, aspartate 179, and histidine 234.

It belongs to the iron/ascorbate-dependent oxidoreductase family. Requires Fe cation as cofactor.

It carries out the reaction 1-aminocyclopropane-1-carboxylate + L-ascorbate + O2 = ethene + L-dehydroascorbate + hydrogen cyanide + CO2 + 2 H2O. The protein operates within alkene biosynthesis; ethylene biosynthesis via S-adenosyl-L-methionine; ethylene from S-adenosyl-L-methionine: step 2/2. The sequence is that of 1-aminocyclopropane-1-carboxylate oxidase 3 (ACO3) from Petunia hybrida (Petunia).